A 469-amino-acid chain; its full sequence is Ufm1-specific protease 2 (469 aa).

Met-1 bears the N-acetylmethionine mark. Residues Cys-302, Asp-426, and His-428 contribute to the active site.

The protein belongs to the peptidase C78 family. Expressed in brain.

It is found in the endoplasmic reticulum. Its subcellular location is the cytoplasm. It localises to the nucleus. Its function is as follows. Thiol-dependent isopeptidase that specifically cleaves UFM1, a ubiquitin-like modifier protein, from conjugated proteins, such as CD274/PD-L1, CYB5R3, DDRGK1, MRE11, RPL26/uL24, TRIP4 and RPL26/uL24. While it is also able to mediate the processing of UFM1 precursors, a prerequisite for conjugation reactions, UFSP2 mainly acts as a protein deUFMylase that mediates deconjugation of UFM1 from target proteins. Mediates deUFMylation of RPL26/uL24, a critical step to release the UFM1 ribosome E3 ligase (UREL) complex during the recycling of 60S ribosome subunits from the endoplasmic reticulum. Catalyzes deUFMylation of TRIP4, regulating intracellular nuclear receptors transactivation and thereby regulate cell proliferation and differentiation. This is Ufm1-specific protease 2 from Homo sapiens (Human).